A 305-amino-acid chain; its full sequence is ATP synthase gamma chain (305 aa).

It belongs to the ATPase gamma chain family. F-type ATPases have 2 components, CF(1) - the catalytic core - and CF(0) - the membrane proton channel. CF(1) has five subunits: alpha(3), beta(3), gamma(1), delta(1), epsilon(1). CF(0) has three main subunits: a, b and c.

The protein resides in the cell membrane. Produces ATP from ADP in the presence of a proton gradient across the membrane. The gamma chain is believed to be important in regulating ATPase activity and the flow of protons through the CF(0) complex. The polypeptide is ATP synthase gamma chain (Streptomyces coelicolor (strain ATCC BAA-471 / A3(2) / M145)).